The sequence spans 130 residues: Small ribosomal subunit protein uS11 (130 aa).

The protein belongs to the universal ribosomal protein uS11 family. Part of the 30S ribosomal subunit. Interacts with proteins S7 and S18. Binds to IF-3.

In terms of biological role, located on the platform of the 30S subunit, it bridges several disparate RNA helices of the 16S rRNA. Forms part of the Shine-Dalgarno cleft in the 70S ribosome. This Caldicellulosiruptor bescii (strain ATCC BAA-1888 / DSM 6725 / KCTC 15123 / Z-1320) (Anaerocellum thermophilum) protein is Small ribosomal subunit protein uS11.